The sequence spans 329 residues: Secretory carrier-associated membrane protein 2 (329 aa).

The disordered stretch occupies residues 1 to 74; it reads MSAFDTNPFA…PSVEPAQPTP (74 aa). The Cytoplasmic segment spans residues 1–153; it reads MSAFDTNPFA…DYQRICKMLY (153 aa). 2 stretches are compositionally biased toward polar residues: residues 19 to 31 and 40 to 51; these read QDPS…NAPQ and FSETNAATTVPA. Residues 154–174 traverse the membrane as a helical segment; sequence YLWMLHSVTLFLNLLACLAWF. Residues 175-181 are Lumenal-facing; sequence TSDAANG. A helical transmembrane segment spans residues 182–202; sequence TAFGLSILWFLIFTPCAFLCW. Topologically, residues 203–218 are cytoplasmic; that stretch reads YRPIYKAFRSDNSFSF. Residues 203–218 form an interaction with SLC9A7 region; the sequence is YRPIYKAFRSDNSFSF. A helical membrane pass occupies residues 219 to 239; it reads FVFFFVFFCQIGIYFIQLIGL. The Lumenal portion of the chain corresponds to 240-262; it reads PNLGTSGWLAALSTMKNGPLAVT. Residues 263–283 form a helical membrane-spanning segment; sequence IIMMVVAGFFTLCAGLSLFLL. Over 284 to 329 the chain is Cytoplasmic; sequence QRVHAFYRRTGASFQQAQEEFSQGIFSSRTFRGAASSAARGAFQGN. 2 positions are modified to phosphoserine: serine 319 and serine 320.

Belongs to the SCAMP family. As to quaternary structure, interacts with SLC6A4 and SLC9A7. Interacts with SLC9A5; this interaction regulates SLC9A5 cell-surface targeting and SLC9A5 activity.

The protein localises to the golgi apparatus. Its subcellular location is the trans-Golgi network membrane. It localises to the recycling endosome membrane. In terms of biological role, functions in post-Golgi recycling pathways. Acts as a recycling carrier to the cell surface. The chain is Secretory carrier-associated membrane protein 2 (Scamp2) from Mus musculus (Mouse).